We begin with the raw amino-acid sequence, 214 residues long: MNIVFLGPPGAGKGTYAKELKEILGIPHISTGDMFREEISAKSELGRKVEDILKRGELVPDDLTNVIVKERLSKPDCKKGFILDGYPRTVAQAKALDEILKKLGRELKFAIYFEVSEDVVVKRISNRRICKNCGKIYNLITLPPKINGKCDVCGGELYQREDDREEVVRRRYKVYMDNTYPVIEYYRKSNKLFTVDGSMDVDSVIKEVLNIIRR.

ATP is bound at residue 10-15 (GAGKGT). Residues 30 to 59 (STGDMFREEISAKSELGRKVEDILKRGELV) are NMP. AMP-binding positions include T31, R36, 57–59 (ELV), 85–88 (GYPR), and Q92. Residues 126–163 (NRRICKNCGKIYNLITLPPKINGKCDVCGGELYQREDD) are LID. R127 provides a ligand contact to ATP. Residues C130 and C133 each coordinate Zn(2+). 136-137 (IY) is a binding site for ATP. 2 residues coordinate Zn(2+): C150 and C153. 2 residues coordinate AMP: R160 and R171. ATP is bound at residue M199.

Belongs to the adenylate kinase family. Monomer.

It is found in the cytoplasm. It catalyses the reaction AMP + ATP = 2 ADP. The protein operates within purine metabolism; AMP biosynthesis via salvage pathway; AMP from ADP: step 1/1. In terms of biological role, catalyzes the reversible transfer of the terminal phosphate group between ATP and AMP. Plays an important role in cellular energy homeostasis and in adenine nucleotide metabolism. This is Adenylate kinase from Thermosipho melanesiensis (strain DSM 12029 / CIP 104789 / BI429).